Consider the following 154-residue polypeptide: 3-dehydroquinate dehydratase (154 aa).

The Proton acceptor role is filled by Y22. Substrate is bound by residues N73, H79, and D86. The active-site Proton donor is H99. Residues 100-101 (LS) and R110 each bind substrate.

The protein belongs to the type-II 3-dehydroquinase family. In terms of assembly, homododecamer.

It carries out the reaction 3-dehydroquinate = 3-dehydroshikimate + H2O. It functions in the pathway metabolic intermediate biosynthesis; chorismate biosynthesis; chorismate from D-erythrose 4-phosphate and phosphoenolpyruvate: step 3/7. In terms of biological role, catalyzes a trans-dehydration via an enolate intermediate. The chain is 3-dehydroquinate dehydratase from Carboxydothermus hydrogenoformans (strain ATCC BAA-161 / DSM 6008 / Z-2901).